The chain runs to 337 residues: LIX1-like protein (337 aa).

The interval 1–64 is disordered; sequence METMRAQRLQ…PLLLSGAPGL (64 aa). The segment covering 26–38 has biased composition (low complexity); the sequence is PGVTGAAAATATP. The span at 39-56 shows a compositional bias: pro residues; it reads PAGPPPAPPPPAPPPPPL.

The protein belongs to the LIX1 family.

The chain is LIX1-like protein (LIX1L) from Homo sapiens (Human).